Reading from the N-terminus, the 299-residue chain is Protease HtpX homolog (299 aa).

Transmembrane regions (helical) follow at residues 16 to 36 and 38 to 58; these read VMAAFVILLAVIGLAVGYVFF and SAIAGLLVALIAAVFYMVLMI. A Zn(2+)-binding site is contributed by H144. The active site involves E145. H148 serves as a coordination point for Zn(2+). Helical transmembrane passes span 159–179 and 198–218; these read IALALTAAISLLVNWGMNAFW and VLLMILAIVVIILAPLAASLV. E227 contacts Zn(2+).

This sequence belongs to the peptidase M48B family. Requires Zn(2+) as cofactor.

It localises to the cell membrane. This chain is Protease HtpX homolog, found in Lactiplantibacillus plantarum (strain ATCC BAA-793 / NCIMB 8826 / WCFS1) (Lactobacillus plantarum).